We begin with the raw amino-acid sequence, 222 residues long: UPF0502 protein SO_1867 (222 aa).

A compositionally biased stretch (polar residues) spans 169–193; sequence EQVSATSLSADSPSADSNSLNAQDR. The segment at 169 to 195 is disordered; the sequence is EQVSATSLSADSPSADSNSLNAQDRQQ.

This sequence belongs to the UPF0502 family.

The sequence is that of UPF0502 protein SO_1867 from Shewanella oneidensis (strain ATCC 700550 / JCM 31522 / CIP 106686 / LMG 19005 / NCIMB 14063 / MR-1).